The primary structure comprises 468 residues: UDP-N-acetylmuramoyl-L-alanine--L-glutamate ligase (468 aa).

122–128 (GTKGKST) is a binding site for ATP.

It belongs to the MurCDEF family. MurD2 subfamily.

It is found in the cytoplasm. The enzyme catalyses UDP-N-acetyl-alpha-D-muramoyl-L-alanine + L-glutamate + ATP = UDP-N-acetyl-alpha-D-muramoyl-L-alanyl-L-glutamate + ADP + phosphate + H(+). Its pathway is cell wall biogenesis; peptidoglycan biosynthesis. In terms of biological role, cell wall formation. Catalyzes the addition of L-glutamate to the nucleotide precursor UDP-N-acetylmuramoyl-L-alanine. Has weak activity with D-glutamate. The polypeptide is UDP-N-acetylmuramoyl-L-alanine--L-glutamate ligase (Xanthomonas oryzae pv. oryzae (strain MAFF 311018)).